Consider the following 399-residue polypeptide: Succinate--CoA ligase [ADP-forming] subunit beta (399 aa).

The 246-residue stretch at 9 to 254 (KAVLQPFGVS…ETEEDAKEIE (246 aa)) folds into the ATP-grasp domain. ATP is bound by residues K46, 53 to 55 (GRG), E109, S112, and E117. Mg(2+) is bound by residues N209 and D223. Substrate contacts are provided by residues N274 and 331-333 (GIM).

It belongs to the succinate/malate CoA ligase beta subunit family. In terms of assembly, heterotetramer of two alpha and two beta subunits. The cofactor is Mg(2+).

The enzyme catalyses succinate + ATP + CoA = succinyl-CoA + ADP + phosphate. The catalysed reaction is GTP + succinate + CoA = succinyl-CoA + GDP + phosphate. Its pathway is carbohydrate metabolism; tricarboxylic acid cycle; succinate from succinyl-CoA (ligase route): step 1/1. Its function is as follows. Succinyl-CoA synthetase functions in the citric acid cycle (TCA), coupling the hydrolysis of succinyl-CoA to the synthesis of either ATP or GTP and thus represents the only step of substrate-level phosphorylation in the TCA. The beta subunit provides nucleotide specificity of the enzyme and binds the substrate succinate, while the binding sites for coenzyme A and phosphate are found in the alpha subunit. This is Succinate--CoA ligase [ADP-forming] subunit beta from Rhodopseudomonas palustris (strain BisB18).